The primary structure comprises 461 residues: Photosystem II CP43 reaction center protein (461 aa).

The propeptide occupies 1-2 (ME). The residue at position 3 (T3) is an N-acetylthreonine. T3 is subject to Phosphothreonine. Helical transmembrane passes span 57-81 (LFEVAHFVPEKPMYEQGLILLPHLA), 122-143 (LIGPETLEESFPFFGYVWKDKN), 166-188 (KAMYFGGVYDTWAPGGGDVRVIT), 243-263 (KPFAWARRALVWSGEAYLSYS), and 279-300 (WFNNTAYPSEFYGPTGPEASQA). E355 contributes to the [CaMn4O5] cluster binding site. The helical transmembrane segment at 435–459 (RARAAAAGFEKGIERETEPALSMKP) threads the bilayer.

It belongs to the PsbB/PsbC family. PsbC subfamily. As to quaternary structure, PSII is composed of 1 copy each of membrane proteins PsbA, PsbB, PsbC, PsbD, PsbE, PsbF, PsbH, PsbI, PsbJ, PsbK, PsbL, PsbM, PsbT, PsbX, PsbY, PsbZ, Psb30/Ycf12, at least 3 peripheral proteins of the oxygen-evolving complex and a large number of cofactors. It forms dimeric complexes. Binds multiple chlorophylls and provides some of the ligands for the Ca-4Mn-5O cluster of the oxygen-evolving complex. It may also provide a ligand for a Cl- that is required for oxygen evolution. PSII binds additional chlorophylls, carotenoids and specific lipids. serves as cofactor.

It localises to the plastid. Its subcellular location is the chloroplast thylakoid membrane. Functionally, one of the components of the core complex of photosystem II (PSII). It binds chlorophyll and helps catalyze the primary light-induced photochemical processes of PSII. PSII is a light-driven water:plastoquinone oxidoreductase, using light energy to abstract electrons from H(2)O, generating O(2) and a proton gradient subsequently used for ATP formation. The chain is Photosystem II CP43 reaction center protein from Chlorokybus atmophyticus (Soil alga).